Here is a 395-residue protein sequence, read N- to C-terminus: Transmembrane protein 79 (395 aa).

The interval 1-115 (MTEPETLALL…PPTKLEELPE (115 aa)) is disordered. Residues 1 to 204 (MTEPETLALL…GREALRAVAS (204 aa)) are Cytoplasmic-facing. Residues 205 to 225 (VGAALILFPCLLYGAYAFLPF) traverse the membrane as a helical segment. The Extracellular segment spans residues 226–244 (DAPRLPTMSSRLIYTLRCG). The helical transmembrane segment at 245-265 (VFATFPIVLGILVYGLSLLCF) threads the bilayer. The Cytoplasmic portion of the chain corresponds to 266 to 290 (AALRPFGEPRREVEIHRQYVAQSVQ). The chain crosses the membrane as a helical span at residues 291-311 (LFILYFFNLAVLSTYLPQDAL). The Extracellular segment spans residues 312-313 (KL). Residues 314-334 (LPLLTGLFAISRLIYWLTFAV) form a helical membrane-spanning segment. At 335–343 (GRSFRGFGY) the chain is on the cytoplasmic side. Residues 344 to 364 (GLTFLPLLSMLLWNFYYMFVV) traverse the membrane as a helical segment. Over 365–395 (EPERMLTASESRLDYPDHARSASDYRPRSRG) the chain is Extracellular.

Its subcellular location is the lysosome. The protein localises to the golgi apparatus. The protein resides in the trans-Golgi network. It is found in the membrane. Contributes to the epidermal integrity and skin barrier function. Plays a role in the lamellar granule (LG) secretory system and in the stratum corneum (SC) epithelial cell formation. The protein is Transmembrane protein 79 (TMEM79) of Bos taurus (Bovine).